A 224-amino-acid chain; its full sequence is MAKNKFNKSWLQDHLTDPYVKMAQKEGYRARAVYKLSEIDEQDHLIKAGMTIVDLGSAPGSWSQYVRNRLTELGKSNPKIESGKPDGQIIAIDILPMEDIADVSFIQGDFREEEGLAALEALLPKSAEGKVDLVLSDMAPNLSGVGVADSARMAFLAEIALDFATAHLKPEGALLIKCFNGSGYSQIVESFKKVFKTVASRKPKASRAKSSEIFLLGKNLKPPK.

Residues Gly60, Trp62, Asp93, Asp109, and Asp137 each contribute to the S-adenosyl-L-methionine site. Lys177 (proton acceptor) is an active-site residue.

The protein belongs to the class I-like SAM-binding methyltransferase superfamily. RNA methyltransferase RlmE family.

Its subcellular location is the cytoplasm. The catalysed reaction is uridine(2552) in 23S rRNA + S-adenosyl-L-methionine = 2'-O-methyluridine(2552) in 23S rRNA + S-adenosyl-L-homocysteine + H(+). Functionally, specifically methylates the uridine in position 2552 of 23S rRNA at the 2'-O position of the ribose in the fully assembled 50S ribosomal subunit. This chain is Ribosomal RNA large subunit methyltransferase E, found in Polynucleobacter asymbioticus (strain DSM 18221 / CIP 109841 / QLW-P1DMWA-1) (Polynucleobacter necessarius subsp. asymbioticus).